The chain runs to 422 residues: UDP-N-acetylglucosamine 1-carboxyvinyltransferase (422 aa).

Residue 22 to 23 (KN) coordinates phosphoenolpyruvate. Arg-93 provides a ligand contact to UDP-N-acetyl-alpha-D-glucosamine. Cys-117 functions as the Proton donor in the catalytic mechanism. Cys-117 is modified (2-(S-cysteinyl)pyruvic acid O-phosphothioketal). UDP-N-acetyl-alpha-D-glucosamine-binding positions include 122 to 126 (RPVDL), Asp-308, and Leu-330.

The protein belongs to the EPSP synthase family. MurA subfamily.

It is found in the cytoplasm. The enzyme catalyses phosphoenolpyruvate + UDP-N-acetyl-alpha-D-glucosamine = UDP-N-acetyl-3-O-(1-carboxyvinyl)-alpha-D-glucosamine + phosphate. Its pathway is cell wall biogenesis; peptidoglycan biosynthesis. In terms of biological role, cell wall formation. Adds enolpyruvyl to UDP-N-acetylglucosamine. The sequence is that of UDP-N-acetylglucosamine 1-carboxyvinyltransferase from Helicobacter pylori (strain P12).